We begin with the raw amino-acid sequence, 159 residues long: Calcium-binding protein CML39 (159 aa).

4 consecutive EF-hand domains span residues 18-53 (EKNR…LGEQ), 54-89 (MSDE…NDEF), 93-128 (EKKR…LGES), and 129-159 (RTTD…LMMR). Residues Asp-31, Asn-33, Asp-35, Arg-37, Glu-42, Asp-67, Asp-69, Asp-71, Met-73, and Glu-78 each coordinate Ca(2+). Ca(2+)-binding residues include Asp-142, Asn-144, Asp-146, and Glu-153.

Expressed in the zones of elongation and differentiation in seedling roots and at the root-hypocotyl junction. Expressed from stage 12 of flower development in anthers, specifically in pollen.

Its function is as follows. Potential calcium sensor that binds calcium in vitro. This chain is Calcium-binding protein CML39 (CML39), found in Arabidopsis thaliana (Mouse-ear cress).